The following is a 365-amino-acid chain: MTNQAEEKRILIMAGGTGGHVFPALAVAKYLSQQGWKVRWLGTAERMEARLVPQHGFDIDFIDIKGVRGNGLMRKLAAPFKILRSVMQARAVIKSFKPDVVMGMGGFASGPGGVAAKLSGIPLVLHEQNAIPGMTNRLLSRIASEVLCAFEGTFTDIKAETVGNPIRKELIALGDKRESCCDDDSLKVLVVGGSLGAKIFNDVMPSVLEGVSKTHSMTVWHQVGRDNLVAVKAEYQRLGQDGSVSVAEFIDDMEAAYRWADVVVCRSGALTVSELAAVGLPSLLVPYPHAVDDHQTKNAKVLVNAGAAFLLPQPIVDTSKLMTKLSMLASDKQELCNMGQRARDVAILDATERVANVCIRLAEKG.

Residues 17 to 19 (TGG), asparagine 129, arginine 167, serine 194, isoleucine 250, 269 to 274 (ALTVSE), and glutamine 295 contribute to the UDP-N-acetyl-alpha-D-glucosamine site.

The protein belongs to the glycosyltransferase 28 family. MurG subfamily.

The protein localises to the cell inner membrane. The enzyme catalyses di-trans,octa-cis-undecaprenyl diphospho-N-acetyl-alpha-D-muramoyl-L-alanyl-D-glutamyl-meso-2,6-diaminopimeloyl-D-alanyl-D-alanine + UDP-N-acetyl-alpha-D-glucosamine = di-trans,octa-cis-undecaprenyl diphospho-[N-acetyl-alpha-D-glucosaminyl-(1-&gt;4)]-N-acetyl-alpha-D-muramoyl-L-alanyl-D-glutamyl-meso-2,6-diaminopimeloyl-D-alanyl-D-alanine + UDP + H(+). Its pathway is cell wall biogenesis; peptidoglycan biosynthesis. In terms of biological role, cell wall formation. Catalyzes the transfer of a GlcNAc subunit on undecaprenyl-pyrophosphoryl-MurNAc-pentapeptide (lipid intermediate I) to form undecaprenyl-pyrophosphoryl-MurNAc-(pentapeptide)GlcNAc (lipid intermediate II). The polypeptide is UDP-N-acetylglucosamine--N-acetylmuramyl-(pentapeptide) pyrophosphoryl-undecaprenol N-acetylglucosamine transferase (Shewanella pealeana (strain ATCC 700345 / ANG-SQ1)).